The sequence spans 221 residues: MAGVGSAVRRLYLSVYNWAVFFGWAQVLYYAVTTLLESGHEAVYAAVERPLQFAQTAAFLEILHGLVGLVRSPVSATLPQIGSRLFLTWGILWSFPETHSHILVTSLVISWSITEIIRYSFFGMKEAFGFAPSWLLWLRYSTFMVLYPTGISSEVGLIYIALPYMKASEKYCLRMPNKWNFSFDFFYASILSLAIYVPGSPHMFTYMLAQRKKALAKAKAA.

The Cytoplasmic portion of the chain corresponds to 1–11; sequence MAGVGSAVRRL. A helical transmembrane segment spans residues 12-32; the sequence is YLSVYNWAVFFGWAQVLYYAV. The Lumenal portion of the chain corresponds to 33–51; that stretch reads TTLLESGHEAVYAAVERPL. The chain crosses the membrane as a helical span at residues 52-70; the sequence is QFAQTAAFLEILHGLVGLV. The Cytoplasmic portion of the chain corresponds to 71–76; the sequence is RSPVSA. Residues 77-95 form a helical membrane-spanning segment; the sequence is TLPQIGSRLFLTWGILWSF. Residues 96-100 lie on the Lumenal side of the membrane; that stretch reads PETHS. A helical transmembrane segment spans residues 101–121; sequence HILVTSLVISWSITEIIRYSF. At 122-141 the chain is on the cytoplasmic side; that stretch reads FGMKEAFGFAPSWLLWLRYS. Residues 142–165 form a helical membrane-spanning segment; it reads TFMVLYPTGISSEVGLIYIALPYM. Active-site residues include Tyr-147 and Glu-154. Over 166 to 184 the chain is Lumenal; that stretch reads KASEKYCLRMPNKWNFSFD. The chain crosses the membrane as a helical span at residues 185-209; that stretch reads FFYASILSLAIYVPGSPHMFTYMLA. Over 210-221 the chain is Cytoplasmic; sequence QRKKALAKAKAA.

It belongs to the very long-chain fatty acids dehydratase HACD family.

The protein resides in the endoplasmic reticulum membrane. It carries out the reaction a very-long-chain (3R)-3-hydroxyacyl-CoA = a very-long-chain (2E)-enoyl-CoA + H2O. The protein operates within lipid metabolism; fatty acid biosynthesis. Functionally, catalyzes the third of the four reactions of the long-chain fatty acids elongation cycle. This endoplasmic reticulum-bound enzymatic process, allows the addition of two carbons to the chain of long- and very long-chain fatty acids/VLCFAs per cycle. This enzyme catalyzes the dehydration of the 3-hydroxyacyl-CoA intermediate into trans-2,3-enoyl-CoA, within each cycle of fatty acid elongation. Thereby, it participates in the production of VLCFAs of different chain lengths that are involved in multiple biological processes as precursors of membrane lipids and lipid mediators. May be an anti-phosphatase that prevents CDKA-1 dephosphorylation and activation. Involved in the hormonal control of cell division and differentiation. Required for proliferation control of meristematic and non-meristematic cells. Negative regulator of the cell cycle. The sequence is that of Very-long-chain (3R)-3-hydroxyacyl-CoA dehydratase PASTICCINO 2A (PAS2A) from Oryza sativa subsp. japonica (Rice).